Consider the following 260-residue polypeptide: Dolichol-phosphate mannosyltransferase subunit 1 (260 aa).

The disordered stretch occupies residues 1–25; that stretch reads MASTGASRSLAASPRPPQGRSSRQD. Position 2 is an N-acetylalanine (Ala2). 2 positions are modified to phosphoserine: Ser3 and Ser9. GDP-alpha-D-mannose-binding residues include Pro32, Tyr34, Glu36, Ile63, Asp65, Asp118, Ala119, Asp120, Arg147, Arg234, and Lys240. Asp120 serves as a coordination point for Mg(2+). Residue Asp120 coordinates Mn(2+).

Belongs to the glycosyltransferase 2 family. In terms of assembly, component of the dolichol-phosphate mannose (DPM) synthase complex composed of DPM1, DPM2 and DPM3; within the complex, directly interacts with DPM3. This interaction may stabilize DPM1. Mg(2+) serves as cofactor. The cofactor is Mn(2+). It depends on Ca(2+) as a cofactor.

The protein resides in the endoplasmic reticulum. The enzyme catalyses a di-trans,poly-cis-dolichyl phosphate + GDP-alpha-D-mannose = a di-trans,poly-cis-dolichyl beta-D-mannosyl phosphate + GDP. Its pathway is protein modification; protein glycosylation. In terms of biological role, transfers mannose from GDP-mannose to dolichol monophosphate to form dolichol phosphate mannose (Dol-P-Man) which is the mannosyl donor in pathways leading to N-glycosylation, glycosyl phosphatidylinositol membrane anchoring, and O-mannosylation of proteins; catalytic subunit of the dolichol-phosphate mannose (DPM) synthase complex. This chain is Dolichol-phosphate mannosyltransferase subunit 1 (Dpm1), found in Mus musculus (Mouse).